A 325-amino-acid chain; its full sequence is 4-hydroxy-3-methylbut-2-enyl diphosphate reductase (325 aa).

C21 contributes to the [4Fe-4S] cluster binding site. Residues H50 and H83 each contribute to the (2E)-4-hydroxy-3-methylbut-2-enyl diphosphate site. Dimethylallyl diphosphate is bound by residues H50 and H83. 2 residues coordinate isopentenyl diphosphate: H50 and H83. Residue C105 coordinates [4Fe-4S] cluster. H133 contributes to the (2E)-4-hydroxy-3-methylbut-2-enyl diphosphate binding site. H133 provides a ligand contact to dimethylallyl diphosphate. H133 is an isopentenyl diphosphate binding site. Residue E135 is the Proton donor of the active site. Residue T173 participates in (2E)-4-hydroxy-3-methylbut-2-enyl diphosphate binding. C203 contributes to the [4Fe-4S] cluster binding site. Positions 231, 232, 233, and 275 each coordinate (2E)-4-hydroxy-3-methylbut-2-enyl diphosphate. Positions 231, 232, 233, and 275 each coordinate dimethylallyl diphosphate. Isopentenyl diphosphate-binding residues include S231, S232, N233, and S275.

The protein belongs to the IspH family. [4Fe-4S] cluster serves as cofactor.

The enzyme catalyses isopentenyl diphosphate + 2 oxidized [2Fe-2S]-[ferredoxin] + H2O = (2E)-4-hydroxy-3-methylbut-2-enyl diphosphate + 2 reduced [2Fe-2S]-[ferredoxin] + 2 H(+). It carries out the reaction dimethylallyl diphosphate + 2 oxidized [2Fe-2S]-[ferredoxin] + H2O = (2E)-4-hydroxy-3-methylbut-2-enyl diphosphate + 2 reduced [2Fe-2S]-[ferredoxin] + 2 H(+). It participates in isoprenoid biosynthesis; dimethylallyl diphosphate biosynthesis; dimethylallyl diphosphate from (2E)-4-hydroxy-3-methylbutenyl diphosphate: step 1/1. Its pathway is isoprenoid biosynthesis; isopentenyl diphosphate biosynthesis via DXP pathway; isopentenyl diphosphate from 1-deoxy-D-xylulose 5-phosphate: step 6/6. In terms of biological role, catalyzes the conversion of 1-hydroxy-2-methyl-2-(E)-butenyl 4-diphosphate (HMBPP) into a mixture of isopentenyl diphosphate (IPP) and dimethylallyl diphosphate (DMAPP). Acts in the terminal step of the DOXP/MEP pathway for isoprenoid precursor biosynthesis. The protein is 4-hydroxy-3-methylbut-2-enyl diphosphate reductase of Bordetella pertussis (strain Tohama I / ATCC BAA-589 / NCTC 13251).